The primary structure comprises 331 residues: Pyrimidine monooxygenase RutA (331 aa).

FMN-binding positions include 79–80, N145, E154, 170–171, and S220; these read IK and RY. Residues 300–331 are disordered; the sequence is WLTEQSQKDTRSGTDTNVRQMADPTSASAFNH. Over residues 312–331 the composition is skewed to polar residues; that stretch reads GTDTNVRQMADPTSASAFNH.

It belongs to the NtaA/SnaA/DszA monooxygenase family. RutA subfamily.

It carries out the reaction uracil + FMNH2 + NADH + O2 = (Z)-3-ureidoacrylate + FMN + NAD(+) + H2O + H(+). The catalysed reaction is thymine + FMNH2 + NADH + O2 = (Z)-2-methylureidoacrylate + FMN + NAD(+) + H2O + H(+). Its function is as follows. Catalyzes the pyrimidine ring opening between N-3 and C-4 by an unusual flavin hydroperoxide-catalyzed mechanism, adding oxygen atoms in the process to yield ureidoacrylate peracid, that immediately reacts with FMN forming ureidoacrylate and FMN-N(5)-oxide. The FMN-N(5)-oxide reacts spontaneously with NADH to produce FMN. Requires the flavin reductase RutF to regenerate FMN in vivo. The polypeptide is Pyrimidine monooxygenase RutA (Escherichia coli O7:K1 (strain IAI39 / ExPEC)).